The chain runs to 143 residues: Putative cytokinin riboside 5'-monophosphate phosphoribohydrolase LOG9 (143 aa).

Residues 23–24 (RK), 41–47 (RYETMEE), and T53 each bind substrate.

The protein belongs to the LOG family.

It catalyses the reaction N(6)-(dimethylallyl)adenosine 5'-phosphate + H2O = N(6)-dimethylallyladenine + D-ribose 5-phosphate. The catalysed reaction is 9-ribosyl-trans-zeatin 5'-phosphate + H2O = trans-zeatin + D-ribose 5-phosphate. Cytokinin-activating enzyme working in the direct activation pathway. Phosphoribohydrolase that converts inactive cytokinin nucleotides to the biologically active free-base forms. This chain is Putative cytokinin riboside 5'-monophosphate phosphoribohydrolase LOG9 (LOG9), found in Arabidopsis thaliana (Mouse-ear cress).